A 912-amino-acid polypeptide reads, in one-letter code: Microtubule-associated protein 10 (912 aa).

Disordered stretches follow at residues 31–50 (VAEE…RPSR), 209–239 (KSVE…ADKP), 254–296 (GRAF…QEGT), 335–366 (ASEE…SATG), 443–469 (SPES…NEKS), and 730–859 (RACD…VSSY). Over residues 211–229 (VEVSPQTWQENQQLQQPDS) the composition is skewed to polar residues. A compositionally biased stretch (basic and acidic residues) spans 254–263 (GRAFHSKADS). Residues 266 to 295 (TDSMENGKTNSDMCSKGSSERSVSPPNQEG) show a composition bias toward polar residues. The segment covering 347 to 362 (ENVNPPTHTNPPEHTN) has biased composition (low complexity). A compositionally biased stretch (basic and acidic residues) spans 452–468 (CKSESKKDKLSVGENEK). Positions 735–768 (SPGTENPKNSQHTSTSSETRLSIRKNSSAKSSIL) are enriched in polar residues. Residues 796–807 (EASSSDFSSSQW) show a composition bias toward low complexity. Residues 841–859 (GCKSSEKSQSPRTSQVSSY) are compositionally biased toward polar residues.

In terms of assembly, interacts (via middle region) with microtubules.

It is found in the cytoplasm. The protein localises to the cytoskeleton. The protein resides in the spindle pole. It localises to the microtubule organizing center. Its subcellular location is the centrosome. It is found in the midbody. Microtubule-associated protein (MAP) that plays a role in the regulation of cell division; promotes microtubule stability and participates in the organization of the spindle midzone and normal progress of cytokinesis. This chain is Microtubule-associated protein 10 (MAP10), found in Bos taurus (Bovine).